Consider the following 277-residue polypeptide: Probable CCR4-associated factor 1 homolog 10 (277 aa).

Positions 40, 42, 166, and 235 each coordinate a divalent metal cation.

This sequence belongs to the CAF1 family. As to quaternary structure, component of the CCR4-NOT complex, at least composed of CRR4 and CAF1 proteins. Requires a divalent metal cation as cofactor.

The protein localises to the nucleus. It localises to the cytoplasm. It carries out the reaction Exonucleolytic cleavage of poly(A) to 5'-AMP.. Its function is as follows. Ubiquitous transcription factor required for a diverse set of processes. It is a component of the CCR4 complex involved in the control of gene expression. The sequence is that of Probable CCR4-associated factor 1 homolog 10 (CAF1-10) from Arabidopsis thaliana (Mouse-ear cress).